Here is a 100-residue protein sequence, read N- to C-terminus: Putative pterin-4-alpha-carbinolamine dehydratase (100 aa).

This sequence belongs to the pterin-4-alpha-carbinolamine dehydratase family.

The enzyme catalyses (4aS,6R)-4a-hydroxy-L-erythro-5,6,7,8-tetrahydrobiopterin = (6R)-L-erythro-6,7-dihydrobiopterin + H2O. In Bradyrhizobium diazoefficiens (strain JCM 10833 / BCRC 13528 / IAM 13628 / NBRC 14792 / USDA 110), this protein is Putative pterin-4-alpha-carbinolamine dehydratase.